The following is a 60-amino-acid chain: Sperm protamine P1 (60 aa).

The disordered stretch occupies residues 1–60 (MARYRHSRSRSRSRYQRRRRRRSRYRSQRRRYRRRRGSRRRRRRGRRRGYRRRYSRRRRY).

It belongs to the protamine P1 family. As to expression, testis.

The protein resides in the nucleus. It localises to the chromosome. In terms of biological role, protamines substitute for histones in the chromatin of sperm during the haploid phase of spermatogenesis. They compact sperm DNA into a highly condensed, stable and inactive complex. The sequence is that of Sperm protamine P1 (PRM1) from Phascolarctos cinereus (Koala).